We begin with the raw amino-acid sequence, 204 residues long: Leucyl/phenylalanyl-tRNA--protein transferase (204 aa).

The protein belongs to the L/F-transferase family.

It is found in the cytoplasm. The catalysed reaction is N-terminal L-lysyl-[protein] + L-leucyl-tRNA(Leu) = N-terminal L-leucyl-L-lysyl-[protein] + tRNA(Leu) + H(+). It catalyses the reaction N-terminal L-arginyl-[protein] + L-leucyl-tRNA(Leu) = N-terminal L-leucyl-L-arginyl-[protein] + tRNA(Leu) + H(+). The enzyme catalyses L-phenylalanyl-tRNA(Phe) + an N-terminal L-alpha-aminoacyl-[protein] = an N-terminal L-phenylalanyl-L-alpha-aminoacyl-[protein] + tRNA(Phe). In terms of biological role, functions in the N-end rule pathway of protein degradation where it conjugates Leu, Phe and, less efficiently, Met from aminoacyl-tRNAs to the N-termini of proteins containing an N-terminal arginine or lysine. The sequence is that of Leucyl/phenylalanyl-tRNA--protein transferase from Brucella melitensis biotype 2 (strain ATCC 23457).